The sequence spans 101 residues: Small ribosomal subunit protein eS24 (101 aa).

Belongs to the eukaryotic ribosomal protein eS24 family.

This is Small ribosomal subunit protein eS24 from Methanocaldococcus jannaschii (strain ATCC 43067 / DSM 2661 / JAL-1 / JCM 10045 / NBRC 100440) (Methanococcus jannaschii).